Consider the following 118-residue polypeptide: D-dopachrome decarboxylase (118 aa).

P2 is modified (N-acetylproline).

It belongs to the MIF family. Homotrimer.

Its subcellular location is the cytoplasm. It catalyses the reaction D-dopachrome + H(+) = 5,6-dihydroxyindole + CO2. Tautomerization of D-dopachrome with decarboxylation to give 5,6-dihydroxyindole (DHI). In Gallus gallus (Chicken), this protein is D-dopachrome decarboxylase (DDT).